A 250-amino-acid polypeptide reads, in one-letter code: UPF0259 membrane protein SG1383 (250 aa).

6 helical membrane passes run 20-40 (FASI…LGHA), 86-106 (AGTL…LTMI), 121-141 (IGLS…TTLL), 146-166 (LLLI…APVI), 191-211 (LLAP…LLAT), and 219-239 (LVAV…LLIY).

It belongs to the UPF0259 family.

Its subcellular location is the cell inner membrane. The sequence is that of UPF0259 membrane protein SG1383 from Sodalis glossinidius (strain morsitans).